Reading from the N-terminus, the 245-residue chain is Transmembrane and ubiquitin-like domain-containing protein 1 (245 aa).

The required to release iHOPS from membranes stretch occupies residues 2–30; it reads ALIEGVGDEVTVLFSVLACLLVLALAWVS. Residues 11–31 form a helical membrane-spanning segment; that stretch reads VTVLFSVLACLLVLALAWVST. Positions 34–51 are enriched in polar residues; sequence TESTDPLPQSSGTTTPAQ. Residues 34 to 100 form a disordered region; the sequence is TESTDPLPQS…ASTPPDSPQE (67 aa). A phosphoserine mark is found at Ser-73, Ser-97, and Ser-126. The Ubiquitin-like domain occupies 102–175; sequence LLLRLKFLND…LHCHVSTRVG (74 aa). A run of 2 helical transmembrane segments spans residues 194–214 and 219–239; these read IGSL…YCQI and FFPL…SLLA.

Interacts with EEF1A1, GRIA2, GRIP1. Interacts with CAMLG, TUBG1. Interacts with NPM1 and CDKN2A; TMUB1 can enhance interaction between NPM1 and CDKN2A and is proposed to bridge the proteins; proposed to be mediated by iHOPS. Interacts with ERLIN2 and AMFR; TMUB1 promotes the interaction of ERLIN2 with AMFR. Processed by regulated intramembrane proteolysis (RIP) in the N-terminus to release iHOPS from membranes.

The protein resides in the membrane. Its subcellular location is the postsynaptic cell membrane. The protein localises to the recycling endosome. It is found in the cytoplasm. It localises to the cytoskeleton. The protein resides in the microtubule organizing center. Its subcellular location is the centrosome. The protein localises to the nucleus. It is found in the nucleolus. Involved in sterol-regulated ubiquitination and degradation of HMG-CoA reductase HMGCR. Involved in positive regulation of AMPA-selective glutamate receptor GRIA2 recycling to the cell surface. Acts as a negative regulator of hepatocyte growth during regeneration. Its function is as follows. May contribute to the regulation of translation during cell-cycle progression. May contribute to the regulation of cell proliferation. May be involved in centrosome assembly. Modulates stabilization and nucleolar localization of tumor suppressor CDKN2A and enhances association between CDKN2A and NPM1. The protein is Transmembrane and ubiquitin-like domain-containing protein 1 (Tmub1) of Rattus norvegicus (Rat).